A 662-amino-acid chain; its full sequence is Methyl-accepting chemotaxis protein McpB (662 aa).

Topologically, residues 1 to 16 are cytoplasmic; the sequence is MKTFINWLKKPSISKK. Residues 17-37 traverse the membrane as a helical segment; sequence LIVSFIAILIIPILILEFSSY. Topologically, residues 38 to 282 are extracellular; sequence RSASGKLDQE…IKDASKSVLT (245 aa). Residues 153–229 enclose the Cache domain; sequence VTDPYVAASD…KAGEKLSGDW (77 aa). Residues 283 to 303 traverse the membrane as a helical segment; it reads TGMIVLIASIVAGGILILFIV. Positions 304 to 356 constitute an HAMP domain; it reads RSITKPLKRLVQSSKTISRGDLTETIEIHSKDELGELGESFNEMGQSLRSLIS. The Cytoplasmic segment spans residues 304–662; sequence RSITKPLKRL…RDLTKQFKIE (359 aa). A glutamate methyl ester (Gln) mark is found at Gln371 and Gln595. The 237-residue stretch at 375-611 folds into the Methyl-accepting transducer domain; it reads SAGQTSKATE…HVSAAVSGIA (237 aa). A glutamate methyl ester (Glu) mark is found at Glu630 and Glu637.

The protein belongs to the methyl-accepting chemotaxis (MCP) protein family. As to quaternary structure, interacts with FloT. In terms of processing, some glutamine residues are deamidated to glutamate by CheD and subsequently methylated. The demethylation is selective. Gln-371 is demethylated only upon asparagine addition whereas Glu-637 is demethylated only upon asparagine removal. Glu-630 appears indiscriminate and is demethylated upon both addition and removal of asparagine.

It is found in the cell membrane. It localises to the membrane raft. Functionally, chemotactic-signal transducers respond to changes in the concentration of attractants and repellents in the environment, transduce a signal from the outside to the inside of the cell, and facilitate sensory adaptation through the variation of the level of methylation. All amino acids serve as attractants in B.subtilis, they appear to cause an increase in the turnover methyl groups, leading to methylation of an unidentified acceptor, while repellents have been shown to cause a decrease in methyl group turnover. The methyl groups are added by a methyltransferase and removed by a methylesterase. McpB is required for taxis towards asparagine, aspartate, glutamine, and histidine. The protein is Methyl-accepting chemotaxis protein McpB (mcpB) of Bacillus subtilis (strain 168).